The following is a 36-amino-acid chain: uncharacterized protein (36 aa).

This is an uncharacterized protein from Halalkalibacterium halodurans (strain ATCC BAA-125 / DSM 18197 / FERM 7344 / JCM 9153 / C-125) (Bacillus halodurans).